The following is a 260-amino-acid chain: OCIA domain-containing protein 1 (260 aa).

The OCIA domain maps to 1–110 (MDSPLSDGSR…MRLPNSRLGE (110 aa)). The disordered stretch occupies residues 146-260 (DVYTDEGLNP…KNKYGDSWQD (115 aa)). Residues 155–164 (PSRSTALNLD) are compositionally biased toward polar residues. The span at 205–215 (EDLRKKNREGY) shows a compositional bias: basic and acidic residues.

The protein belongs to the OCIAD1 family.

This Drosophila pseudoobscura pseudoobscura (Fruit fly) protein is OCIA domain-containing protein 1.